We begin with the raw amino-acid sequence, 316 residues long: Pantothenate kinase (316 aa).

95–102 (GSVAVGKS) lines the ATP pocket.

It belongs to the prokaryotic pantothenate kinase family.

The protein localises to the cytoplasm. The enzyme catalyses (R)-pantothenate + ATP = (R)-4'-phosphopantothenate + ADP + H(+). It participates in cofactor biosynthesis; coenzyme A biosynthesis; CoA from (R)-pantothenate: step 1/5. The polypeptide is Pantothenate kinase (Shewanella piezotolerans (strain WP3 / JCM 13877)).